Reading from the N-terminus, the 916-residue chain is Phosphoenolpyruvate carboxylase (916 aa).

Residues His144 and Lys578 contribute to the active site.

This sequence belongs to the PEPCase type 1 family. Mg(2+) is required as a cofactor.

The catalysed reaction is oxaloacetate + phosphate = phosphoenolpyruvate + hydrogencarbonate. Forms oxaloacetate, a four-carbon dicarboxylic acid source for the tricarboxylic acid cycle. The chain is Phosphoenolpyruvate carboxylase from Aromatoleum aromaticum (strain DSM 19018 / LMG 30748 / EbN1) (Azoarcus sp. (strain EbN1)).